Reading from the N-terminus, the 391-residue chain is Multidrug resistance protein MdtL (391 aa).

The next 12 helical transmembrane spans lie at 4 to 24 (FLICSFALVLLYPAGIDMYLV), 42 to 62 (IAFSVYLAGMAAAMLFAGKVA), 69 to 89 (PVAIPGAALFIIASVFCSLAE), 93 to 113 (LFLAGRFLQGLGAGCCYVVAF), 131 to 151 (LLNGITCIIPVLAPVLGHLIM), 158 to 178 (SLFWAMAMMGIAVLMLSLFIL), 203 to 222 (FFLSRVVITTLSVSVILTFV), 245 to 265 (ALTAGVSMTVSFSTPFALGIF), 269 to 289 (TLMITSQVLFLAAGITLAVSP), 293 to 313 (VSLFGITLICAGFSVGFGVAM), 331 to 351 (LGIAQVCGSSLWIWLAAVVGI), and 356 to 376 (MLIGILIACSIVSLLLIMFVA).

This sequence belongs to the major facilitator superfamily. DHA1 family. MdtL (TC 2.A.1.2.22) subfamily.

Its subcellular location is the cell inner membrane. Confers resistance to chloramphenicol. This Escherichia coli O9:H4 (strain HS) protein is Multidrug resistance protein MdtL.